Here is a 593-residue protein sequence, read N- to C-terminus: MDSSANINKALTETRFSDLEPPLSGDIIEALNQSDFEFCTPVQAATIPLLCSYKDVAVDAATGSGKTLAFVVPLVEILRRSTSFPPKPHQVMGVIISPTRELSTQIYNVAQPFVSTLANVNSVLLVGGREVKADMKIIEEEGCNVLIGTPGRLSDIMERMEILDFRNLEILILDEADRLLEMGFQRQVNYIISRLPKQRRTGLFSATQTEGVEELAKAGLRNPVRVEVRAKSKSESSQQLTNSKTPSGLHLEYMECEADKKSSQLVDLLIKNSDKKLIVFFMTCASVDYWGLVLSKIPALKSISLIPIHGDMKQNARDKALASFTKASSGALLCTDVAARGLDIPGIDYVVQYDPPQDPNMFNHRAGRTARLGRQGRAIVFLLPKEEAYVEFMRIRRVPLEERKCSEDASDVIPIIRSAAMKDRAVMEKGLKAFVSFVRAYKEHHCSFIFRWKDLEIGKLAMGYGLLYLPSMSEVKQHRLSSEGFTPVEGVKFEEIKFKDKYREKQRQQNLQVRKEKRQEEKKEKGKRKRVDASASNDPKKASRKLTGKQRQTIQTAEDEEVMDRDYKLMIKVKKGLIKEDEYERLTGDDDLF.

Positions 16–44 match the Q motif motif; sequence FSDLEPPLSGDIIEALNQSDFEFCTPVQA. Positions 47–226 constitute a Helicase ATP-binding domain; the sequence is IPLLCSYKDV…KAGLRNPVRV (180 aa). Residue 60–67 coordinates ATP; it reads AATGSGKT. A DEAD box motif is present at residues 174–177; the sequence is DEAD. The Helicase C-terminal domain occupies 264 to 411; it reads QLVDLLIKNS…ERKCSEDASD (148 aa). The span at 506-524 shows a compositional bias: basic and acidic residues; it reads QRQQNLQVRKEKRQEEKKE. The tract at residues 506 to 561 is disordered; it reads QRQQNLQVRKEKRQEEKKEKGKRKRVDASASNDPKKASRKLTGKQRQTIQTAEDEE.

This sequence belongs to the DEAD box helicase family. DDX55/SPB4 subfamily.

The enzyme catalyses ATP + H2O = ADP + phosphate + H(+). The chain is DEAD-box ATP-dependent RNA helicase 18 (RH18) from Arabidopsis thaliana (Mouse-ear cress).